Consider the following 307-residue polypeptide: tRNA dimethylallyltransferase (307 aa).

Position 10-17 (10-17) interacts with ATP; the sequence is GPTASGKS. 12-17 serves as a coordination point for substrate; sequence TASGKS. 2 interaction with substrate tRNA regions span residues 35 to 38 and 159 to 163; these read DSMQ and QRLCR.

This sequence belongs to the IPP transferase family. As to quaternary structure, monomer. Requires Mg(2+) as cofactor.

It carries out the reaction adenosine(37) in tRNA + dimethylallyl diphosphate = N(6)-dimethylallyladenosine(37) in tRNA + diphosphate. Catalyzes the transfer of a dimethylallyl group onto the adenine at position 37 in tRNAs that read codons beginning with uridine, leading to the formation of N6-(dimethylallyl)adenosine (i(6)A). This chain is tRNA dimethylallyltransferase, found in Phenylobacterium zucineum (strain HLK1).